The following is a 240-amino-acid chain: RNA-free ribonuclease P (240 aa).

It belongs to the HARP family.

The catalysed reaction is Endonucleolytic cleavage of RNA, removing 5'-extranucleotides from tRNA precursor.. Functionally, RNA-free RNase P that catalyzes the removal of the 5'-leader sequence from pre-tRNA to produce the mature 5'-terminus. This chain is RNA-free ribonuclease P, found in Methanococcus aeolicus (strain ATCC BAA-1280 / DSM 17508 / OCM 812 / Nankai-3).